The following is a 152-amino-acid chain: ESAT-6 secretion machinery protein EssA (152 aa).

Residues 1 to 114 (MLMNSVIALT…PYIQNKQEKK (114 aa)) are Cytoplasmic-facing. A helical membrane pass occupies residues 115-135 (IFPYILMSVGAFLTLGFVIFS). Over 136–152 (IHKGRRTKNESARKSNI) the chain is Extracellular.

It belongs to the EssA family.

Its subcellular location is the cell membrane. Component of the ESAT-6 secretion system (Ess). Required for the secretion of EsxA and EsxB. The sequence is that of ESAT-6 secretion machinery protein EssA from Staphylococcus aureus (strain Mu50 / ATCC 700699).